A 365-amino-acid chain; its full sequence is N5-carboxyaminoimidazole ribonucleotide synthase (365 aa).

Residues R102, K143, 148–154, 177–180, E185, and 256–257 each bind ATP; these read GYDGKGQ, EEYV, and NE. One can recognise an ATP-grasp domain in the interval 106–286; the sequence is KLFYRQHNLP…QFEQHLRAII (181 aa).

This sequence belongs to the PurK/PurT family. In terms of assembly, homodimer.

The enzyme catalyses 5-amino-1-(5-phospho-beta-D-ribosyl)imidazole + hydrogencarbonate + ATP = 5-carboxyamino-1-(5-phospho-D-ribosyl)imidazole + ADP + phosphate + 2 H(+). It participates in purine metabolism; IMP biosynthesis via de novo pathway; 5-amino-1-(5-phospho-D-ribosyl)imidazole-4-carboxylate from 5-amino-1-(5-phospho-D-ribosyl)imidazole (N5-CAIR route): step 1/2. Catalyzes the ATP-dependent conversion of 5-aminoimidazole ribonucleotide (AIR) and HCO(3)(-) to N5-carboxyaminoimidazole ribonucleotide (N5-CAIR). The protein is N5-carboxyaminoimidazole ribonucleotide synthase of Saccharolobus solfataricus (strain ATCC 35092 / DSM 1617 / JCM 11322 / P2) (Sulfolobus solfataricus).